Here is a 718-residue protein sequence, read N- to C-terminus: Kelch-like protein 4 (718 aa).

Positions 46 to 69 are disordered; sequence TPVQGRLKSHSRDRNGLKKSNSPV. The BTB domain occupies 182-249; the sequence is CDVLLIAGHL…AYTGVLQLKE (68 aa). Kelch repeat units follow at residues 430-476, 477-523, 525-570, 571-617, 619-670, and 671-717; these read ALYA…VIDN, KLYV…TLEG, MYAV…ALNN, KLYA…TYNG, LYVV…PLGD, and KLYV…VVKL.

In terms of tissue distribution, expressed in adult fibroblasts and in a range of fetal tissues including tongue, palate, and mandible.

It is found in the cytoplasm. The protein resides in the cytoskeleton. This is Kelch-like protein 4 (KLHL4) from Homo sapiens (Human).